A 420-amino-acid polypeptide reads, in one-letter code: D-tagatose-1,6-bisphosphate aldolase subunit GatZ (420 aa).

Belongs to the GatZ/KbaZ family. GatZ subfamily. Forms a complex with GatY.

The protein operates within carbohydrate metabolism; D-tagatose 6-phosphate degradation; D-glyceraldehyde 3-phosphate and glycerone phosphate from D-tagatose 6-phosphate: step 2/2. Component of the tagatose-1,6-bisphosphate aldolase GatYZ that is required for full activity and stability of the Y subunit. Could have a chaperone-like function for the proper and stable folding of GatY. When expressed alone, GatZ does not show any aldolase activity. Is involved in the catabolism of galactitol. This is D-tagatose-1,6-bisphosphate aldolase subunit GatZ from Shigella flexneri serotype 5b (strain 8401).